A 149-amino-acid chain; its full sequence is Large ribosomal subunit protein uL15 (149 aa).

A compositionally biased stretch (basic and acidic residues) spans 1–11 (MSDPIKLHDLR). The interval 1 to 44 (MSDPIKLHDLRPAPGAKKAKTRVGRGEASKGKTAGRGTKGTKAR) is disordered.

This sequence belongs to the universal ribosomal protein uL15 family. Part of the 50S ribosomal subunit.

In terms of biological role, binds to the 23S rRNA. The polypeptide is Large ribosomal subunit protein uL15 (Corynebacterium jeikeium (strain K411)).